A 465-amino-acid chain; its full sequence is Ras GTPase-activating protein-binding protein 1 (465 aa).

One can recognise an NTF2 domain in the interval 11-133; that stretch reads VGREFVRQYY…FYVHNDIFRY (123 aa). Glycyl lysine isopeptide (Lys-Gly) (interchain with G-Cter in ubiquitin) cross-links involve residues K36, K50, K59, K64, K76, and K123. Residues 142 to 224 are acidic disordered region; that stretch reads VTEPQEESEE…EAALEEAAPD (83 aa). A Phosphothreonine modification is found at T143. The segment at 144-330 is disordered; the sequence is EPQEESEEEV…GEPGDVEPRR (187 aa). Acidic residues-rich tracts occupy residues 145 to 157 and 184 to 205; these read PQEE…EEPE and EHLE…EPEP. S149 carries the post-translational modification Phosphoserine. Phosphoserine is present on residues S231, S248, and S251. Residues 248–257 show a composition bias toward polar residues; sequence SWASVTSKNL. 2 stretches are compositionally biased toward basic and acidic residues: residues 295-305 and 316-330; these read PQRDQRVREQR and PIRE…EPRR. An RRM domain is found at 338-413; the sequence is HQLFIGNLPH…VRLNVEEKKT (76 aa). Residues K351 and K355 each participate in a glycyl lysine isopeptide (Lys-Gly) (interchain with G-Cter in ubiquitin) cross-link. S371 bears the Phosphoserine mark. A Glycyl lysine isopeptide (Lys-Gly) (interchain with G-Cter in ubiquitin) cross-link involves residue K374. K374 is subject to N6-acetyllysine; alternate. K374 participates in a covalent cross-link: Glycyl lysine isopeptide (Lys-Gly) (interchain with G-Cter in SUMO2); alternate. K391 participates in a covalent cross-link: Glycyl lysine isopeptide (Lys-Gly) (interchain with G-Cter in ubiquitin); alternate. An RG-rich region region spans residues 408–464; it reads VEEKKTRAAREGDRRDNRLRGPGGPRGGPSGGMRGPPRGGMVQKPGFGVGRGITTPR. Residues 411–426 show a composition bias toward basic and acidic residues; the sequence is KKTRAAREGDRRDNRL. A disordered region spans residues 411-465; sequence KKTRAAREGDRRDNRLRGPGGPRGGPSGGMRGPPRGGMVQKPGFGVGRGITTPRQ. Asymmetric dimethylarginine is present on R427. The span at 428 to 445 shows a compositional bias: gly residues; it reads GPGGPRGGPSGGMRGPPR. Asymmetric dimethylarginine; alternate is present on R433. 4 positions are modified to omega-N-methylarginine; alternate: R433, R445, R458, and R464. R458 bears the Dimethylated arginine; alternate mark.

In terms of assembly, homodimer and oligomer. Component of a TAU mRNP complex, at least composed of IGF2BP1, ELAVL4 and G3BP1. Binds to the SH3 domain of Ras GTPase-activating protein (RASA1) in proliferating cells. No interaction in quiescent cells. Interacts (via NTF2 domain) with USP10; inhibiting stress granule formation by lowering G3BP1 valence. Interacts (via NTF2 domain) with CAPRIN1; promoting stress granule formation by lowering the saturation-concentration of G3BP1. Interacts (via NTF2 domain) with UBAP2L; promoting stress granule formation. Associates (via RG-rich region) with 40S ribosome subunits. Interacts with RPTOR and SPAG5; this complex is increased by oxidative stress. Interacts with ATXN2L. Interacts with STYXL1. Interacts with CGAS (via N-terminus); this interaction promotes the DNA-binding and activation of CGAS. Interacts (via C-terminus) with RIGI. Interacts with PABPC1. Interacts with QKI (isoforms QKI6 and QKI7); directing N(7)-methylguanine-containing mRNAs to stress granules. Mg(2+) is required as a cofactor. Post-translationally, phosphorylation of the acidic disordered region regulates stress granule assembly. RASA1-dependent phosphorylation of Ser-149 induces a conformational change that prevents self-association. Dephosphorylation after HRAS activation is required for stress granule assembly. Ser-149 phosphorylation induces partial nuclear localization. In terms of processing, arg-435 is dimethylated, probably to asymmetric dimethylarginine. Ubiquitinated by TRIM21 via 'Lys-63'-linked polyubiquitination in the NTF2 domain in response to heat shock, leading to stress granule disassembly: ubiquitination promotes interaction with the FAF2 adapter, followed by interaction with VCP, which extracts G3BP1 from stress granules, leading to stress granule disassembly. In case of prolonged stress, ubiquitination by TRIM21 leads to autophagy-dependent degradation of G3BP1 via recruitment of ubiquitinated G3BP1 by SQSTM1 and/or CALCOCO2 to autophagosomes. As to expression, ubiquitous.

Its subcellular location is the cytoplasm. The protein resides in the cytosol. The protein localises to the perikaryon. It localises to the stress granule. It is found in the nucleus. The catalysed reaction is ATP + H2O = ADP + phosphate + H(+). Its activity is regulated as follows. Under physiological conditions, G3BP1 adopts a compact state that is stabilized by intramolecular interactions between the RG-rich and the acidic regions that inhibit phase separation. Upon stress, polysomes disassemble and mRNAs are released in an unfolded protein-free state. Binding of unfolded mRNA to G3BP1 outcompetes the intramolecular interactions and RNA-bound G3BP1 adopts an expanded conformation in which the RG-rich region becomes exposed to engage in protein-protein and protein-RNA interactions, allowing physical cross-linking of RNA molecules to form protein-RNA condensates, leading to liquid-liquid phase separation (LLPS). Functionally, protein involved in various processes, such as stress granule formation and innate immunity. Plays an essential role in stress granule formation. Stress granules are membraneless compartments that store mRNAs and proteins, such as stalled translation pre-initiation complexes, in response to stress. Promotes formation of stress granules phase-separated membraneless compartment by undergoing liquid-liquid phase separation (LLPS) upon unfolded RNA-binding: functions as a molecular switch that triggers RNA-dependent LLPS in response to a rise in intracellular free RNA concentrations. Also acts as an ATP- and magnesium-dependent helicase: unwinds DNA/DNA, RNA/DNA, and RNA/RNA substrates with comparable efficiency. Acts unidirectionally by moving in the 5' to 3' direction along the bound single-stranded DNA. Unwinds preferentially partial DNA and RNA duplexes having a 17 bp annealed portion and either a hanging 3' tail or hanging tails at both 5'- and 3'-ends. Plays an essential role in innate immunity by promoting CGAS and RIGI activity. Participates in the DNA-triggered cGAS/STING pathway by promoting the DNA binding and activation of CGAS. Triggers the condensation of cGAS, a process probably linked to the formation of membrane-less organelles. Also enhances RIGI-induced type I interferon production probably by helping RIGI at sensing pathogenic RNA. May also act as a phosphorylation-dependent sequence-specific endoribonuclease in vitro: Cleaves exclusively between cytosine and adenine and cleaves MYC mRNA preferentially at the 3'-UTR. The chain is Ras GTPase-activating protein-binding protein 1 (G3bp1) from Mus musculus (Mouse).